The following is a 104-amino-acid chain: Large ribosomal subunit protein uL24 (104 aa).

It belongs to the universal ribosomal protein uL24 family. As to quaternary structure, part of the 50S ribosomal subunit.

Functionally, one of two assembly initiator proteins, it binds directly to the 5'-end of the 23S rRNA, where it nucleates assembly of the 50S subunit. One of the proteins that surrounds the polypeptide exit tunnel on the outside of the subunit. This chain is Large ribosomal subunit protein uL24, found in Clostridium botulinum (strain Alaska E43 / Type E3).